A 595-amino-acid chain; its full sequence is Threonine dehydratase 2 biosynthetic, chloroplastic (595 aa).

The N-terminal 51 residues, 1–51 (MEFLCLAPTRSFSTNPKLTKSIPSDHTSTTSRIFTYQNMRGSTMRPLALPL), are a transit peptide targeting the chloroplast. N6-(pyridoxal phosphate)lysine is present on Lys-143. 2 consecutive ACT-like domains span residues 420 to 492 (ALLA…NLSH) and 514 to 585 (IFGE…LDNY).

This sequence belongs to the serine/threonine dehydratase family. In terms of assembly, homotetramer. Pyridoxal 5'-phosphate serves as cofactor. Proteolytically cleaved by a chymotrypsin-like digestive protease in the midgut of the lepidopteran insects to remove the C-terminal regulatory domain, which allows efficient metabolizing of threonine in the presence of high isoleucine levels in the gut. Expressed in floral buds, 8-9 mm long flowers 1 to 2 days before anthesis, open flowers and floral organs including sepals, petals, stamens and carpels of 8-9 mm flowers (at protein level). Expressed in very early floral meristems of the anantha. Over 500-fold expression in mature flowers compared to leaves. Expressed in sepals, petals, stamens and carpels of the mature flower. In sepals, mostly expressed in the abaxial mesophyll cells and in petals in parenchymal cells. Not expressed in epidermal or vascular tissues of sepals and petals. In stamens, expressed in parenchymal cells of the connective and lobes, but not expressed in differentiated tissues such as tapetum (TP), stomium (SM), or pollen grains (PG). Not expressed in roots or seeds. High level of expression in immature flower buds, unopened flowers and opened flowers. Not expressed in unstressed leaves, root, stem or petiole.

The protein localises to the plastid. It is found in the chloroplast. It carries out the reaction L-threonine = 2-oxobutanoate + NH4(+). The enzyme catalyses L-serine = pyruvate + NH4(+). The protein operates within amino-acid biosynthesis; L-isoleucine biosynthesis; 2-oxobutanoate from L-threonine: step 1/1. Its activity is regulated as follows. Threonine dehydratase 2 biosynthetic, chloroplastic: Strongly inhibited by 1 mM isoleucine. Processed threonine dehydratase 2: Not inhibited by isoleucine. Not required for normal growth and development of the plant. Its function is as follows. Involved in defense against lepidopteran, but not coleopteran herbivore insects. Acts in the insect gut to degrade threonine, which is an essential and limiting nutrient for the growth of lepidopteran larvae. Active against both L-threonine and L-serine. The protein is Threonine dehydratase 2 biosynthetic, chloroplastic of Solanum lycopersicum (Tomato).